Here is a 328-residue protein sequence, read N- to C-terminus: Malate dehydrogenase (328 aa).

An NAD(+)-binding site is contributed by 11-17 (GAAGQIG). The substrate site is built by Arg-94 and Arg-100. Residues Asn-107, Gln-114, and 131–133 (VGN) contribute to the NAD(+) site. Residues Asn-133 and Arg-164 each contribute to the substrate site. The active-site Proton acceptor is the His-189.

This sequence belongs to the LDH/MDH superfamily. MDH type 2 family.

The catalysed reaction is (S)-malate + NAD(+) = oxaloacetate + NADH + H(+). Functionally, catalyzes the reversible oxidation of malate to oxaloacetate. The polypeptide is Malate dehydrogenase (Xanthomonas axonopodis pv. citri (strain 306)).